We begin with the raw amino-acid sequence, 311 residues long: Formimidoylglutamase (311 aa).

Histidine 130, aspartate 155, histidine 157, aspartate 159, cysteine 242, and aspartate 244 together coordinate Mn(2+).

It belongs to the arginase family. Requires Mn(2+) as cofactor.

It carries out the reaction N-formimidoyl-L-glutamate + H2O = formamide + L-glutamate. Its pathway is amino-acid degradation; L-histidine degradation into L-glutamate; L-glutamate from N-formimidoyl-L-glutamate (hydrolase route): step 1/1. Its function is as follows. Catalyzes the conversion of N-formimidoyl-L-glutamate to L-glutamate and formamide. This chain is Formimidoylglutamase, found in Staphylococcus aureus (strain Mu3 / ATCC 700698).